The sequence spans 314 residues: Small ribosomal subunit biogenesis GTPase RsgA (314 aa).

Residues 1 to 21 are disordered; that stretch reads MKRAPTKQPAKPAARGGERAQ. Positions 85–246 constitute a CP-type G domain; sequence SDQFKSKLFA…LIDSPGFQEF (162 aa). Residues 134–137 and 188–196 each bind GTP; these read NKID and GQSGMGKST. Cys-270, Cys-275, His-277, and Cys-283 together coordinate Zn(2+).

It belongs to the TRAFAC class YlqF/YawG GTPase family. RsgA subfamily. In terms of assembly, monomer. Associates with 30S ribosomal subunit, binds 16S rRNA. The cofactor is Zn(2+).

It localises to the cytoplasm. One of several proteins that assist in the late maturation steps of the functional core of the 30S ribosomal subunit. Helps release RbfA from mature subunits. May play a role in the assembly of ribosomal proteins into the subunit. Circularly permuted GTPase that catalyzes slow GTP hydrolysis, GTPase activity is stimulated by the 30S ribosomal subunit. This Burkholderia pseudomallei (strain 1710b) protein is Small ribosomal subunit biogenesis GTPase RsgA.